The chain runs to 137 residues: Golgin subfamily A member 7 (137 aa).

S-palmitoyl cysteine attachment occurs at residues cysteine 69 and cysteine 72.

It belongs to the ERF4 family. In terms of assembly, interacts with GOLGA3. Interacts with ZDHHC9. Post-translationally, palmitoylated on Cys-69 and Cys-72; which is required for Golgi localization and interaction with GOLGA3.

It localises to the golgi apparatus membrane. Its function is as follows. May be involved in protein transport from Golgi to cell surface. The ZDHHC9-GOLGA7 complex is a palmitoyltransferase specific for HRAS and NRAS. The chain is Golgin subfamily A member 7 (Golga7) from Rattus norvegicus (Rat).